The primary structure comprises 483 residues: Docking protein 1 (483 aa).

The residue at position 1 (methionine 1) is an N-acetylmethionine. Residues 4–119 (AVMEGPLFLQ…WVQTLCQNAF (116 aa)) form the PH domain. Serine 48 bears the Phosphoserine mark. Residues 151–259 (EGSQFWVTVQ…HRQKIQGKAG (109 aa)) enclose the IRS-type PTB domain. Phosphoserine occurs at positions 269 and 291. Residues 293 to 326 (PALYSEPLDSLRIPPGPSQDSLYSDPLDSTPARA) form a disordered region. A phosphotyrosine mark is found at tyrosine 296, tyrosine 337, tyrosine 362, tyrosine 377, tyrosine 398, and tyrosine 409. The interval 409 to 483 (YAVPPPRSTK…RTGAKSEGST (75 aa)) is disordered. Over residues 411-424 (VPPPRSTKPFPAPK) the composition is skewed to pro residues. Phosphoserine is present on serine 416. The segment covering 434–460 (GAATGSGSQGHSSDTALYSQVQKSGAS) has biased composition (polar residues). Residue tyrosine 451 is modified to Phosphotyrosine. A Phosphoserine modification is found at serine 462.

The protein belongs to the DOK family. Type A subfamily. As to quaternary structure, interacts with RasGAP, INPP5D/SHIP1 and ABL1. Interacts directly with phosphorylated ITGB3. Interacts with SRMS (via the SH2 and SH3 domains). Post-translationally, constitutively tyrosine-phosphorylated. Phosphorylated by TEC. Phosphorylated by LYN. Phosphorylated on tyrosine residues by the insulin receptor kinase. Results in the negative regulation of the insulin signaling pathway. Phosphorylated on tyrosine residues by SRMS.

It localises to the cytoplasm. The protein localises to the nucleus. In terms of biological role, DOK proteins are enzymatically inert adaptor or scaffolding proteins. They provide a docking platform for the assembly of multimolecular signaling complexes. DOK1 appears to be a negative regulator of the insulin signaling pathway. Modulates integrin activation by competing with talin for the same binding site on ITGB3. The chain is Docking protein 1 (DOK1) from Bos taurus (Bovine).